A 187-amino-acid chain; its full sequence is Elongation factor P (187 aa).

It belongs to the elongation factor P family.

The protein resides in the cytoplasm. It participates in protein biosynthesis; polypeptide chain elongation. Its function is as follows. Involved in peptide bond synthesis. Stimulates efficient translation and peptide-bond synthesis on native or reconstituted 70S ribosomes in vitro. Probably functions indirectly by altering the affinity of the ribosome for aminoacyl-tRNA, thus increasing their reactivity as acceptors for peptidyl transferase. In Synechococcus sp. (strain WH7803), this protein is Elongation factor P.